The following is a 469-amino-acid chain: Probable periplasmic serine endoprotease DegP-like (469 aa).

The signal sequence occupies residues 1–25 (MNRLLKQVCMVVVSSFMMASMLTHA). Active-site charge relay system residues include His-114, Asp-144, and Ser-217. Residues 215–217 (GNS) and 272–276 (LGVLI) contribute to the substrate site. 2 PDZ domains span residues 261–352 (LKSD…YRDG) and 358–458 (SVTL…IRQG).

The protein belongs to the peptidase S1C family.

The protein resides in the periplasm. It carries out the reaction Acts on substrates that are at least partially unfolded. The cleavage site P1 residue is normally between a pair of hydrophobic residues, such as Val-|-Val.. Functionally, might be efficient in the degradation of transiently denatured and unfolded proteins which accumulate in the periplasm following stress conditions. The protein is Probable periplasmic serine endoprotease DegP-like of Marinomonas sp. (strain MWYL1).